A 367-amino-acid polypeptide reads, in one-letter code: Polygalacturonase (367 aa).

The N-terminal stretch at 1–19 (MSIRLIAVLSAASIAVTSA) is a signal peptide. Residues Cys-27 and Cys-42 are joined by a disulfide bond. The N-linked (GlcNAc...) asparagine glycan is linked to Asn-185. Residues 187–208 (TDQLTIEDTVVKNQDDCIAVNQ) form a PbH1 1 repeat. Asp-201 acts as the Proton donor in catalysis. A disulfide bridge links Cys-203 with Cys-219. The active site involves His-223. Residues 240-261 (VRNVTFSNSVVRKSRNGIHIKT) form a PbH1 2 repeat. N-linked (GlcNAc...) asparagine glycosylation is present at Asn-242. Residues Cys-334 and Cys-339 are joined by a disulfide bond. Asn-343 and Asn-357 each carry an N-linked (GlcNAc...) asparagine glycan. A disulfide bridge links Cys-358 with Cys-367.

This sequence belongs to the glycosyl hydrolase 28 family. In terms of tissue distribution, expressed in larval carcasses and gut, and adult gut.

The protein localises to the secreted. The protein resides in the cell wall. The catalysed reaction is (1,4-alpha-D-galacturonosyl)n+m + H2O = (1,4-alpha-D-galacturonosyl)n + (1,4-alpha-D-galacturonosyl)m.. This is Polygalacturonase from Phaedon cochleariae (Mustard beetle).